Reading from the N-terminus, the 467-residue chain is tRNA-2-methylthio-N(6)-dimethylallyladenosine synthase (467 aa).

Positions 1 to 20 are disordered; sequence MSDDTTQIEPAMAQETSPRA. The MTTase N-terminal domain maps to 23–143; the sequence is RKVFVKTYGC…LPNALARVRG (121 aa). Positions 32, 68, 106, 184, 188, and 191 each coordinate [4Fe-4S] cluster. In terms of domain architecture, Radical SAM core spans 170–402; it reads RKRGVSAFLT…QALLSAQQYA (233 aa). The TRAM domain occupies 405–467; sequence DSMIGRKMDV…TNSLIAQKLA (63 aa).

This sequence belongs to the methylthiotransferase family. MiaB subfamily. As to quaternary structure, monomer. It depends on [4Fe-4S] cluster as a cofactor.

The protein localises to the cytoplasm. It carries out the reaction N(6)-dimethylallyladenosine(37) in tRNA + (sulfur carrier)-SH + AH2 + 2 S-adenosyl-L-methionine = 2-methylsulfanyl-N(6)-dimethylallyladenosine(37) in tRNA + (sulfur carrier)-H + 5'-deoxyadenosine + L-methionine + A + S-adenosyl-L-homocysteine + 2 H(+). Its function is as follows. Catalyzes the methylthiolation of N6-(dimethylallyl)adenosine (i(6)A), leading to the formation of 2-methylthio-N6-(dimethylallyl)adenosine (ms(2)i(6)A) at position 37 in tRNAs that read codons beginning with uridine. This Brucella suis (strain ATCC 23445 / NCTC 10510) protein is tRNA-2-methylthio-N(6)-dimethylallyladenosine synthase.